The following is a 212-amino-acid chain: Uridine kinase (212 aa).

13 to 20 is a binding site for ATP; that stretch reads GASASGKS.

It belongs to the uridine kinase family.

It is found in the cytoplasm. It catalyses the reaction uridine + ATP = UMP + ADP + H(+). It carries out the reaction cytidine + ATP = CMP + ADP + H(+). It functions in the pathway pyrimidine metabolism; CTP biosynthesis via salvage pathway; CTP from cytidine: step 1/3. It participates in pyrimidine metabolism; UMP biosynthesis via salvage pathway; UMP from uridine: step 1/1. The sequence is that of Uridine kinase from Shewanella piezotolerans (strain WP3 / JCM 13877).